A 1032-amino-acid polypeptide reads, in one-letter code: MRFQNPFAFRPGPVSFWTTVIYLALVIPLIYVHETVPPAPSDRSLYQGLNLTEAWLDLQTISRAFHPYNSHENDVVRQFLIDRTKEILDRNSMPYTTETIGGVDWHTRNAFVQTQDSDLNPRDEFIQSRPRGATLFDDKISNVTWTYNTARPTGTNIAKGTWMGQYFEGNNYYVYIHGKDDPEGEWWRSESAYKKFRGQGGVLVNCHFDSVSTGYGATDDGMSCVSMLQLLSYFTLQGRQPKNGIVLLFNNAEEDGLLGARAFGYSPLLHFTHTFVNLEGAGAGGRAILFRTTDLQAAKVYAKSPHPFGSVVAANAFERGVIKSATDYEIFADIFGQRGMDIAFYAPRARYHTNQDDTRHTSVNSIWHMLSAALASTERFSQITGTTFHGDRSDGKSDLVQNGKKAEGVWFDIFGSAWAVFALRGLFAWSLTLLVATPLILVAITYILARKDKYYFFSRDIKMHHDINDDPVVLGGWKGFLRFPFALVFAGALTIASTLLLAKFNPLIIYSSPYAVWSMTLSIFYFSFWLIMRGASFIRPSALHRGYVLIWLFALGWGLQVVGAVAEDRLHIAALYATVFLQSAVFLALFISLLEQFALLGKHDFAMQLHDAHQARDISSHGTDHESRPQPEEEPAQPEGDEDESEDATETTPLRANEPGYGSSTRTSFAATYRRSVADNAPSPPRMRRYQPYEHEQSWSGRLPSWTWIIQFLLLAPVPVILFGNLGLVAMSALQMTGTDGGSLLVPVLTLGIVSIFLLLPLTPFIHRVSHHVPMFLLCVFAGTFIYNLVAFPFSDSHRFKFYFQQVVDLDNGTDTVSIVGLERFSRSVIKSLPSASSQDIKCEKAVGRDLMECLYDSSSLSPHLVEGKTPRELITFETVDGTNASKGRLRIDALDSRLCYLHTSRPIYGFAVDGGAARDPRFGGFPSEGFKTIQLWRRDRDRPWTVNLYLDEHSQQADKSFEGEHKKLGDGSVVHRRADDPLEVTVRCAWSDANKPGTIPALDELLKYMPTWAAVTKKNVGLVEVRKTYKV.

Residues 1 to 11 are Cytoplasmic-facing; sequence MRFQNPFAFRP. Residues 12 to 32 traverse the membrane as a helical segment; that stretch reads GPVSFWTTVIYLALVIPLIYV. Topologically, residues 33–426 are vacuolar; the sequence is HETVPPAPSD…AWAVFALRGL (394 aa). 2 N-linked (GlcNAc...) asparagine glycosylation sites follow: asparagine 50 and asparagine 142. Residues histidine 207 and aspartate 219 each contribute to the Zn(2+) site. The Proton acceptor role is filled by glutamate 253. Residues glutamate 254, glutamate 279, and histidine 352 each coordinate Zn(2+). The chain crosses the membrane as a helical span at residues 427–447; that stretch reads FAWSLTLLVATPLILVAITYI. The Cytoplasmic segment spans residues 448–482; that stretch reads LARKDKYYFFSRDIKMHHDINDDPVVLGGWKGFLR. The chain crosses the membrane as a helical span at residues 483-503; that stretch reads FPFALVFAGALTIASTLLLAK. The Vacuolar segment spans residues 504 to 511; it reads FNPLIIYS. The helical transmembrane segment at 512 to 532 threads the bilayer; it reads SPYAVWSMTLSIFYFSFWLIM. Residues 533 to 545 lie on the Cytoplasmic side of the membrane; the sequence is RGASFIRPSALHR. The helical transmembrane segment at 546–566 threads the bilayer; sequence GYVLIWLFALGWGLQVVGAVA. Topologically, residues 567-573 are vacuolar; the sequence is EDRLHIA. Residues 574–594 form a helical membrane-spanning segment; sequence ALYATVFLQSAVFLALFISLL. Residues 595–708 are Cytoplasmic-facing; it reads EQFALLGKHD…WSGRLPSWTW (114 aa). Positions 616–631 are enriched in basic and acidic residues; sequence RDISSHGTDHESRPQP. Residues 616–666 are disordered; that stretch reads RDISSHGTDHESRPQPEEEPAQPEGDEDESEDATETTPLRANEPGYGSSTR. The span at 632 to 649 shows a compositional bias: acidic residues; the sequence is EEEPAQPEGDEDESEDAT. A helical membrane pass occupies residues 709 to 729; it reads IIQFLLLAPVPVILFGNLGLV. Over 730–745 the chain is Vacuolar; sequence AMSALQMTGTDGGSLL. A helical transmembrane segment spans residues 746–766; the sequence is VPVLTLGIVSIFLLLPLTPFI. Residues 767 to 773 are Cytoplasmic-facing; that stretch reads HRVSHHV. The helical transmembrane segment at 774–794 threads the bilayer; sequence PMFLLCVFAGTFIYNLVAFPF. Topologically, residues 795 to 1032 are vacuolar; the sequence is SDSHRFKFYF…LVEVRKTYKV (238 aa). Residues asparagine 812 and asparagine 884 are each glycosylated (N-linked (GlcNAc...) asparagine).

This sequence belongs to the peptidase M28 family. Zn(2+) serves as cofactor.

It localises to the vacuole membrane. In terms of biological role, may be involved in vacuolar sorting and osmoregulation. The protein is Vacuolar membrane protease of Fusarium vanettenii (strain ATCC MYA-4622 / CBS 123669 / FGSC 9596 / NRRL 45880 / 77-13-4) (Fusarium solani subsp. pisi).